Consider the following 479-residue polypeptide: Baeyer-Villiger monooxygenase AacuH (479 aa).

Residues 14–34 form a disordered region; sequence DSLGHPDGASRPPVSAESLSR.

Belongs to the AflY oxidoreductase family.

It functions in the pathway secondary metabolite biosynthesis. In terms of biological role, baeyer-Villiger monooxygenase; part of the gene cluster that mediates the biosynthesis of the tetrahydroxanthone dimer secalonic acid D. The pathway begins with the synthesis of atrochrysone thioester by the polyketide synthase AacuL. The atrochrysone carboxyl ACP thioesterase AacuM then breaks the thioester bond and releases the atrochrysone carboxylic acid from AacuL. Atrochrysone carboxylic acid is decarboxylated by the decarboxylase AacuI, and oxidized by the anthrone oxygenase AacuG to yield emodin. Emodin is then reduced to emodin hydroquinone by a yet unidentified oxidoreductase. A-ring reduction by the short chain dehydrogenase AacuN, dehydration by the scytalone dehydratase-like protein AacuK and probable spontaneous re-oxidation, results in overall deoxygenation to chrysophanol. Baeyer-Villiger oxidation by the Baeyer-Villiger monooxygenase (BVMO) AacuH then yields monodictyphenone. Monodictyphenone is transformed into compounds with the tetrahydroxanthone skeleton via methylesterification by the methyltransferase AacuQ, followed by the action of the flavin-dependent monooxygenase AacuC, the isomerase AacuP, and the short chain dehydrogenase/reductase AacuF or AacuD. AacuF and AacuD should accept the same compound as a substrate but perform the ketoreduction with a different stereoselectivity, thus yielding blennolides B and A, respectively. In the final step of the biosynthesis, the cytochrome P450 monooxygenase AacuE accepts blennolide B and/or blennolide A to conduct the dimerization reaction to furnish the tetrahydroxanthone dimers, secalonic acids D, B, and F. In Aspergillus aculeatus (strain ATCC 16872 / CBS 172.66 / WB 5094), this protein is Baeyer-Villiger monooxygenase AacuH.